The sequence spans 264 residues: Accessory gland-specific peptide 26Aa (264 aa).

Residues 1–18 (MNQILLCSPILLLLFTVA) form the signal peptide. The sufficient for promoting ovulation when expressed in females stretch occupies residues 1 to 138 (MNQILLCSPI…LQQRLLTEQN (138 aa)). Residues Asn88, Asn122, Asn138, and Asn145 are each glycosylated (N-linked (GlcNAc...) asparagine). The disordered stretch occupies residues 189–219 (LQNTRKSTKPCKKRSSKDSAPPAANQFQEAN). The segment covering 194-203 (KSTKPCKKRS) has biased composition (basic residues). Residues 219–264 (NVRNTYRNKYLTLLKELSQKINNEIAKVATDVPTETNPSQGNLPTL) form a necessary and sufficient for homodimerization region.

In terms of assembly, homodimer. As to quaternary structure, may form a homodimer. Glycosylation. In terms of processing, undergoes several cleavages as it is secreted and is further processed in the recipient female. The precursor molecule is proteolytically cleaved by the seminal metalloprotease Semp1 at Lys-48 to produce CP1-N and CP1-C. Post-translationally, cleaved at Lys-67 by Semp1 to generate CP2-N and CP2-C. Cleavage appears to take place in the mated female genital tract. Cleaved at Lys-117 by Semp1 to generate CP3-N and CP3-C. Cleavage appears to take place in the mated female genital tract. As to expression, produced in the male accessory glands and secreted into seminal fluid (at protein level). Detected in the main cells and secondary cells of the accessory glands of 1 day old males (at protein level). In 5 day old males, confined to the secondary cells and only reappears in the main cells after mating (at protein level). Produced in adult males 3-4 hr after eclosion, levels increase reaching a peak at day 3-5 which is maintained until at least day 10 of adulthood (at protein level). In unmated male adults, levels are maintained for the first 6 days of adulthood and then gradually decrease for at least the next 8 days. In mated females, detected in the genital tract 3 minutes after the start of mating (ASM) and is secreted into the female hemolymph via the posterior vaginal wall 5 minutes ASM (at protein level).

It is found in the secreted. Its subcellular location is the cytoplasm. Its function is as follows. Male seminal protein which enhances ovulation in female Drosophila by stimulating the release of oocytes by the ovary following mating. Acts by increasing octopamine (OA) neuronal signaling in the female genital tract leading to the postmating relaxation of the oviduct muscles. This activation of the OA signaling pathway is likely to indirectly contribute to the mating-dependent increase in the number of OA synaptic sites in the female reproductive tract. In terms of biological role, male seminal peptide which is able to enhance ovulation in female Drosophila. The sequence is that of Accessory gland-specific peptide 26Aa from Drosophila melanogaster (Fruit fly).